Reading from the N-terminus, the 217-residue chain is Nucleoside diphosphate kinase homolog 5 (217 aa).

The interval 18-151 (ERTLALIKPD…REIRFMFPHS (134 aa)) is NDK.

Belongs to the NDK family.

The protein localises to the cell projection. It localises to the cilium. In terms of biological role, functions as part of axonemal radial spoke complexes that play an important part in the motility of sperm and cilia. Does not seem to have nucleoside diphosphate kinase (NDPK) activity. Exhibits a 3'-5' exonuclease activity with a preference for single-stranded DNA, suggesting roles in DNA proofreading and repair. This Danio rerio (Zebrafish) protein is Nucleoside diphosphate kinase homolog 5 (nme5).